Consider the following 184-residue polypeptide: Endoribonuclease YbeY (184 aa).

Composition is skewed to acidic residues over residues 1 to 11 (MTVEVGADENP) and 19 to 29 (DGAGDESDDED). Residues 1–37 (MTVEVGADENPDFAHDETDGAGDESDDEDAQGRDPEL) form a disordered region. Residues His146, His150, and His156 each coordinate Zn(2+).

This sequence belongs to the endoribonuclease YbeY family. The cofactor is Zn(2+).

It is found in the cytoplasm. In terms of biological role, single strand-specific metallo-endoribonuclease involved in late-stage 70S ribosome quality control and in maturation of the 3' terminus of the 16S rRNA. The chain is Endoribonuclease YbeY from Burkholderia mallei (strain ATCC 23344).